The sequence spans 410 residues: Hemocyanin, beta-C chain unit D (410 aa).

Histidine 44 and histidine 55 together coordinate Cu cation. Cysteine 50 and cysteine 59 are oxidised to a cystine. A cross-link (2'-(S-cysteinyl)-histidine (Cys-His)) is located at residues 60–62 (CVH). Cu cation contacts are provided by histidine 71, histidine 175, histidine 179, and histidine 206. A disulfide bond links cysteine 165 and cysteine 232. Residue asparagine 253 is glycosylated (N-linked (GlcNAc...) asparagine). A disulfide bridge connects residues cysteine 321 and cysteine 332.

The protein belongs to the tyrosinase family. Hemocyanin subfamily. Decamers of large identical subunits (450 kDa), each containing 8 globular oxygen-binding functional units. It depends on Cu(2+) as a cofactor.

Hemocyanins are copper-containing oxygen carriers occurring freely dissolved in the hemolymph of many mollusks and arthropods. This Helix pomatia (Roman snail) protein is Hemocyanin, beta-C chain unit D.